Reading from the N-terminus, the 137-residue chain is Small ribosomal subunit protein uS12 (137 aa).

The tract at residues 1–20 (MPTTNQLVNRGRTSKVQKQN) is disordered. Position 102 is a 3-methylthioaspartic acid (Asp102).

This sequence belongs to the universal ribosomal protein uS12 family. As to quaternary structure, part of the 30S ribosomal subunit. Contacts proteins S8 and S17. May interact with IF1 in the 30S initiation complex.

With S4 and S5 plays an important role in translational accuracy. In terms of biological role, interacts with and stabilizes bases of the 16S rRNA that are involved in tRNA selection in the A site and with the mRNA backbone. Located at the interface of the 30S and 50S subunits, it traverses the body of the 30S subunit contacting proteins on the other side and probably holding the rRNA structure together. The combined cluster of proteins S8, S12 and S17 appears to hold together the shoulder and platform of the 30S subunit. The polypeptide is Small ribosomal subunit protein uS12 (Mycoplasmopsis synoviae (strain 53) (Mycoplasma synoviae)).